A 128-amino-acid chain; its full sequence is Calcitonin gene-related peptide 1 (128 aa).

Residues 1-25 (MGFQKFSPFLALSILVLLQAGSLHA) form the signal peptide. Residues 26–80 (APFRSALESSPADPATLSEDEARLLLAALVQDYVQMKASELEQEQEREGSRIIAQ) constitute a propeptide that is removed on maturation. Cys84 and Cys89 are disulfide-bonded. Phe119 is modified (phenylalanine amide). A propeptide spanning residues 125–128 (DLQA) is cleaved from the precursor.

Belongs to the calcitonin family. In terms of tissue distribution, expressed in spinal cord.

The protein localises to the secreted. Functionally, CGRP1/CALCA is a peptide hormone that induces vasodilation mediated by the CALCRL-RAMP1 receptor complex. Dilates a variety of vessels including the coronary, cerebral and systemic vasculature. Its abundance in the CNS also points toward a neurotransmitter or neuromodulator role. It also elevates platelet cAMP. CGRP1 can also bind and activate CALCR-RAMP1 (AMYR1) receptor complex. The sequence is that of Calcitonin gene-related peptide 1 from Homo sapiens (Human).